Consider the following 221-residue polypeptide: Probable septum site-determining protein MinC (221 aa).

It belongs to the MinC family. As to quaternary structure, interacts with MinD and FtsZ.

Cell division inhibitor that blocks the formation of polar Z ring septums. Rapidly oscillates between the poles of the cell to destabilize FtsZ filaments that have formed before they mature into polar Z rings. Prevents FtsZ polymerization. This chain is Probable septum site-determining protein MinC, found in Shewanella sp. (strain MR-7).